Here is a 427-residue protein sequence, read N- to C-terminus: Glutamate-1-semialdehyde 2,1-aminomutase (427 aa).

Lys-265 is subject to N6-(pyridoxal phosphate)lysine.

Belongs to the class-III pyridoxal-phosphate-dependent aminotransferase family. HemL subfamily. Homodimer. Pyridoxal 5'-phosphate is required as a cofactor.

The protein resides in the cytoplasm. The catalysed reaction is (S)-4-amino-5-oxopentanoate = 5-aminolevulinate. Its pathway is porphyrin-containing compound metabolism; protoporphyrin-IX biosynthesis; 5-aminolevulinate from L-glutamyl-tRNA(Glu): step 2/2. This chain is Glutamate-1-semialdehyde 2,1-aminomutase, found in Neisseria meningitidis serogroup A / serotype 4A (strain DSM 15465 / Z2491).